The primary structure comprises 301 residues: tRNA dimethylallyltransferase (301 aa).

8 to 15 is a binding site for ATP; it reads GPTAVGKT. 10-15 serves as a coordination point for substrate; it reads TAVGKT. The interaction with substrate tRNA stretch occupies residues 33–36; it reads DSRQ.

This sequence belongs to the IPP transferase family. In terms of assembly, monomer. Mg(2+) is required as a cofactor.

It catalyses the reaction adenosine(37) in tRNA + dimethylallyl diphosphate = N(6)-dimethylallyladenosine(37) in tRNA + diphosphate. Functionally, catalyzes the transfer of a dimethylallyl group onto the adenine at position 37 in tRNAs that read codons beginning with uridine, leading to the formation of N6-(dimethylallyl)adenosine (i(6)A). The polypeptide is tRNA dimethylallyltransferase (Thermosipho melanesiensis (strain DSM 12029 / CIP 104789 / BI429)).